We begin with the raw amino-acid sequence, 496 residues long: Glycerol kinase (496 aa).

An ADP-binding site is contributed by T12. Positions 12, 13, and 14 each coordinate ATP. Position 12 (T12) interacts with sn-glycerol 3-phosphate. An ADP-binding site is contributed by R16. Sn-glycerol 3-phosphate contacts are provided by R82, E83, and Y134. R82, E83, and Y134 together coordinate glycerol. H230 bears the Phosphohistidine; by HPr mark. D244 serves as a coordination point for sn-glycerol 3-phosphate. D244 and Q245 together coordinate glycerol. The ADP site is built by T266 and G309. The ATP site is built by T266, G309, Q313, and G410. G410 and N414 together coordinate ADP.

This sequence belongs to the FGGY kinase family. Homotetramer and homodimer (in equilibrium). The phosphoenolpyruvate-dependent sugar phosphotransferase system (PTS), including enzyme I, and histidine-containing protein (HPr) are required for the phosphorylation, which leads to the activation of the enzyme.

It carries out the reaction glycerol + ATP = sn-glycerol 3-phosphate + ADP + H(+). It participates in polyol metabolism; glycerol degradation via glycerol kinase pathway; sn-glycerol 3-phosphate from glycerol: step 1/1. Activated by phosphorylation and inhibited by fructose 1,6-bisphosphate (FBP). Functionally, key enzyme in the regulation of glycerol uptake and metabolism. Catalyzes the phosphorylation of glycerol to yield sn-glycerol 3-phosphate. The sequence is that of Glycerol kinase from Bacillus cereus (strain G9842).